A 429-amino-acid polypeptide reads, in one-letter code: Protein arginine N-methyltransferase 2 (429 aa).

Disordered stretches follow at residues 41 to 76 and 137 to 180; these read PEVA…EDHE and ALDS…EETP. Residues 137–163 show a composition bias toward acidic residues; sequence ALDSDDEDDEEMAEGEEAQAEDGEEAP. The segment covering 164-174 has biased composition (low complexity); that stretch reads ELVAAEEATQT. In terms of domain architecture, RMT2 spans 190–429; the sequence is LEEQVTSDKY…YRLPVCTFLG (240 aa). Residues Tyr199, Met228, 250 to 255, 271 to 273, 308 to 309, and Asp328 each bind S-adenosyl-L-methionine; these read FGMGII, EAH, and WQ.

The protein belongs to the class I-like SAM-binding methyltransferase superfamily. RMT2 methyltransferase family. In terms of assembly, monomer.

The protein resides in the cytoplasm. Its subcellular location is the nucleus. S-adenosyl-L-methionine-dependent protein-arginine N-methyltransferase that methylates the delta-nitrogen atom of arginine residues to form N5-methylarginine (type IV) in target proteins. Monomethylates ribosomal protein L12. The polypeptide is Protein arginine N-methyltransferase 2 (Neurospora crassa (strain ATCC 24698 / 74-OR23-1A / CBS 708.71 / DSM 1257 / FGSC 987)).